The chain runs to 210 residues: MELQLAIDLLNKEEAAELAKKVEEYVDIVEIGTPIVINEGLPAVQHLDENISNAKVLADLKIMDAADYEVSQAIKFGADVVTILGVAEDASIKAAVEEAHKHDKQLLVDMIAVQDLEKRAKELDEMGADYIAVHTGYDLQAEGQSPLDSLRTVKSVIKNSKVAVAGGIKPDTIKDIVAEQPDLVIVGGGIANADDPVEAAKQCRDAIEGK.

Belongs to the HPS/KGPDC family. HPS subfamily.

It carries out the reaction D-ribulose 5-phosphate + formaldehyde = D-arabino-hex-3-ulose 6-phosphate. It functions in the pathway one-carbon metabolism; formaldehyde assimilation via RuMP pathway; D-fructose 6-phosphate from D-ribulose 5-phosphate and formaldehyde: step 1/2. Catalyzes the condensation of ribulose 5-phosphate with formaldehyde to form 3-hexulose 6-phosphate. The polypeptide is 3-hexulose-6-phosphate synthase (Staphylococcus haemolyticus (strain JCSC1435)).